Reading from the N-terminus, the 132-residue chain is C-glycoside deglycosidase beta subunit (132 aa).

It belongs to the C-glycoside deglycosidase beta subunit family. In terms of assembly, heterodimer composed of an alpha subunit (CarB2) and a beta subunit (CarC2). A divalent metal cation is required as a cofactor.

It catalyses the reaction 3''-dehydroorientin = 1,5-anhydro-D-erythro-hex-1-en-3-ulose + luteolin. Its activity is regulated as follows. Activity is strongly reduced in the presence of chelating agents. Functionally, carbon-carbon bond-cleaving enzyme which participates in the metabolism of C-glycosides. Acts on the C8-glycosylated compound 3''-dehydroorientin (3''-oxo-orientin). In Arthrobacter globiformis (strain ATCC 8010 / DSM 20124 / JCM 1332 / NBRC 12137 / NCIMB 8907 / NRRL B-2979 / 168), this protein is C-glycoside deglycosidase beta subunit.